Consider the following 259-residue polypeptide: Indole-3-glycerol phosphate synthase (259 aa).

The protein belongs to the TrpC family.

The catalysed reaction is 1-(2-carboxyphenylamino)-1-deoxy-D-ribulose 5-phosphate + H(+) = (1S,2R)-1-C-(indol-3-yl)glycerol 3-phosphate + CO2 + H2O. The protein operates within amino-acid biosynthesis; L-tryptophan biosynthesis; L-tryptophan from chorismate: step 4/5. In Dehalococcoides mccartyi (strain CBDB1), this protein is Indole-3-glycerol phosphate synthase.